The primary structure comprises 616 residues: E3 ubiquitin-protein ligase DTX4 (616 aa).

WWE domains lie at 1–78 and 79–155; these read MLLA…PVRR and NYYD…RVRR. 2 disordered regions span residues 223 to 254 and 355 to 387; these read VGKL…PSQV and PPPV…GKTP. Over residues 375 to 384 the composition is skewed to basic residues; that stretch reads KTTKKQAKKG. The RING-type; atypical zinc finger occupies 406–465; sequence CTICMERLTAPSGYKGPQPTVKPDLVGKLSRCGHIYHIYCLVAMYNNGNKDGSLQCPTCK.

Belongs to the Deltex family. As to quaternary structure, interacts with NLRP4. In terms of tissue distribution, expressed in brain, testis, embryonic fibroblasts and thymocytes.

The protein resides in the cytoplasm. The catalysed reaction is S-ubiquitinyl-[E2 ubiquitin-conjugating enzyme]-L-cysteine + [acceptor protein]-L-lysine = [E2 ubiquitin-conjugating enzyme]-L-cysteine + N(6)-ubiquitinyl-[acceptor protein]-L-lysine.. The protein operates within protein modification; protein ubiquitination. Functionally, functions as a ubiquitin ligase protein in vivo, mediating 'Lys48'-linked polyubiquitination and promoting degradation of TBK1, targeting to TBK1 requires interaction with NLRP4. Regulator of Notch signaling, a signaling pathway involved in cell-cell communications that regulates a broad spectrum of cell-fate determinations. The protein is E3 ubiquitin-protein ligase DTX4 (Dtx4) of Mus musculus (Mouse).